The chain runs to 456 residues: Trigger factor (456 aa).

The 86-residue stretch at 192 to 277 (GDTVVIDFVG…IHEVKTKEVP (86 aa)) folds into the PPIase FKBP-type domain.

Belongs to the FKBP-type PPIase family. Tig subfamily.

Its subcellular location is the cytoplasm. It carries out the reaction [protein]-peptidylproline (omega=180) = [protein]-peptidylproline (omega=0). Its function is as follows. Involved in protein export. Acts as a chaperone by maintaining the newly synthesized protein in an open conformation. Functions as a peptidyl-prolyl cis-trans isomerase. This Streptococcus pyogenes serotype M12 (strain MGAS9429) protein is Trigger factor.